Consider the following 274-residue polypeptide: Large ribosomal subunit protein uL2 (274 aa).

Positions 224-274 (VAMNPVDHPHGGGEGRTSGGRHPVTPWGIPTKGYKTRRNKRSNKLIVQKRK) are disordered. The segment covering 257–274 (YKTRRNKRSNKLIVQKRK) has biased composition (basic residues).

It belongs to the universal ribosomal protein uL2 family. As to quaternary structure, part of the 50S ribosomal subunit. Forms a bridge to the 30S subunit in the 70S ribosome.

One of the primary rRNA binding proteins. Required for association of the 30S and 50S subunits to form the 70S ribosome, for tRNA binding and peptide bond formation. It has been suggested to have peptidyltransferase activity; this is somewhat controversial. Makes several contacts with the 16S rRNA in the 70S ribosome. In Francisella tularensis subsp. mediasiatica (strain FSC147), this protein is Large ribosomal subunit protein uL2.